Consider the following 477-residue polypeptide: Salivary plasminogen activator alpha 1 (477 aa).

The signal sequence occupies residues 1–36; that stretch reads MVNTMKTKLLCVLLLCGAVFSLPRQETYRQLARGSR. Positions 40–82 constitute a Fibronectin type-I domain; that stretch reads VACKDEITQMTYRRQESWLRPEVRSKRVEHCQCDRGQARCHTV. 14 disulfide bridges follow: cysteine 42-cysteine 72, cysteine 70-cysteine 79, cysteine 87-cysteine 98, cysteine 92-cysteine 109, cysteine 111-cysteine 120, cysteine 128-cysteine 209, cysteine 149-cysteine 191, cysteine 180-cysteine 204, cysteine 214-cysteine 345, cysteine 257-cysteine 273, cysteine 265-cysteine 334, cysteine 359-cysteine 434, cysteine 391-cysteine 407, and cysteine 424-cysteine 452. In terms of domain architecture, EGF-like spans 83–121; sequence PVNSCSEPRCFNGGTCWQAVYFSDFVCQCPAGYTGKRCE. The 82-residue stretch at 128-209 folds into the Kringle domain; it reads CYEGQGVTYR…TSESCSVPVC (82 aa). Asparagine 153 carries an N-linked (GlcNAc...) asparagine glycan. The Peptidase S1 domain occupies 226–476; the sequence is STGGLFTDIT…YLGWIRDNMH (251 aa). Residues histidine 272 and aspartate 321 each act as charge relay system in the active site. A glycan (N-linked (GlcNAc...) asparagine) is linked at asparagine 398. Catalysis depends on serine 428, which acts as the Charge relay system.

It belongs to the peptidase S1 family. As to quaternary structure, monomer.

The protein resides in the secreted. The catalysed reaction is Specific cleavage of Arg-|-Val bond in plasminogen to form plasmin.. With respect to regulation, activity toward plasminogen is stimulated in the presence of fibrin I. Probably essential to support the feeding habits of this exclusively haematophagous animal. Potent thrombolytic agent. The sequence is that of Salivary plasminogen activator alpha 1 from Desmodus rotundus (Vampire bat).